We begin with the raw amino-acid sequence, 73 residues long: Cell division protein ZapB (73 aa).

A coiled-coil region spans residues 3-67 (LELLSKLETK…WNDKVTGLVG (65 aa)).

It belongs to the ZapB family. Homodimer. The ends of the coiled-coil dimer bind to each other, forming polymers. Interacts with FtsZ.

Its subcellular location is the cytoplasm. In terms of biological role, non-essential, abundant cell division factor that is required for proper Z-ring formation. It is recruited early to the divisome by direct interaction with FtsZ, stimulating Z-ring assembly and thereby promoting cell division earlier in the cell cycle. Its recruitment to the Z-ring requires functional FtsA or ZipA. The chain is Cell division protein ZapB from Shewanella sp. (strain ANA-3).